A 134-amino-acid polypeptide reads, in one-letter code: ATP synthase epsilon chain (134 aa).

Belongs to the ATPase epsilon chain family. In terms of assembly, F-type ATPases have 2 components, CF(1) - the catalytic core - and CF(0) - the membrane proton channel. CF(1) has five subunits: alpha(3), beta(3), gamma(1), delta(1), epsilon(1). CF(0) has three main subunits: a, b and c.

The protein resides in the cellular thylakoid membrane. In terms of biological role, produces ATP from ADP in the presence of a proton gradient across the membrane. This is ATP synthase epsilon chain from Prochlorococcus marinus (strain MIT 9301).